The sequence spans 263 residues: Probable ribosomal RNA small subunit methyltransferase A (263 aa).

S-adenosyl-L-methionine contacts are provided by Leu12, Gly37, Glu58, Asp83, and Asn100.

It belongs to the class I-like SAM-binding methyltransferase superfamily. rRNA adenine N(6)-methyltransferase family. RsmA subfamily.

It localises to the cytoplasm. Its function is as follows. Specifically dimethylates two adjacent adenosines in the loop of a conserved hairpin near the 3'-end of 16S rRNA in the 30S particle. May play a critical role in biogenesis of 30S subunits. In Methanococcus maripaludis (strain C7 / ATCC BAA-1331), this protein is Probable ribosomal RNA small subunit methyltransferase A.